A 331-amino-acid polypeptide reads, in one-letter code: Glucokinase (331 aa).

Residue 14–19 (GDIGGT) participates in ATP binding.

This sequence belongs to the bacterial glucokinase family.

The protein resides in the cytoplasm. It carries out the reaction D-glucose + ATP = D-glucose 6-phosphate + ADP + H(+). The chain is Glucokinase from Aromatoleum aromaticum (strain DSM 19018 / LMG 30748 / EbN1) (Azoarcus sp. (strain EbN1)).